The chain runs to 183 residues: Beta-defensin 129 (183 aa).

The first 19 residues, 1 to 19 (MKLLFPIFASLMLQYQVNT), serve as a signal peptide directing secretion. 3 disulfides stabilise this stretch: C27-C53, C34-C48, and C38-C54. Residues 141–183 (TATSTKSNTKESRDSATASSPPAPPPPNILPTPSLELEEAEEQ) are disordered. Pro residues predominate over residues 161-170 (PPAPPPPNIL).

Belongs to the beta-defensin family.

It localises to the secreted. Functionally, has antibacterial activity. The sequence is that of Beta-defensin 129 (DEFB129) from Gorilla gorilla gorilla (Western lowland gorilla).